We begin with the raw amino-acid sequence, 311 residues long: N-acetylmuramic acid 6-phosphate etherase (311 aa).

In terms of domain architecture, SIS spans 66-229; sequence VAVRMARGGR…STITMIRLGK (164 aa). Glu-94 functions as the Proton donor in the catalytic mechanism. Glu-125 is a catalytic residue.

Belongs to the GCKR-like family. MurNAc-6-P etherase subfamily. In terms of assembly, homodimer.

It catalyses the reaction N-acetyl-D-muramate 6-phosphate + H2O = N-acetyl-D-glucosamine 6-phosphate + (R)-lactate. It participates in amino-sugar metabolism; N-acetylmuramate degradation. Functionally, specifically catalyzes the cleavage of the D-lactyl ether substituent of MurNAc 6-phosphate, producing GlcNAc 6-phosphate and D-lactate. The polypeptide is N-acetylmuramic acid 6-phosphate etherase (Streptomyces coelicolor (strain ATCC BAA-471 / A3(2) / M145)).